The sequence spans 188 residues: Inosine triphosphate pyrophosphatase (188 aa).

Residue 9–14 (TGNAKK) coordinates ITP. Glu39 is a Mg(2+) binding site. ITP contacts are provided by residues Lys51, 67 to 68 (DT), Lys84, 143 to 146 (FGWD), Lys166, and 171 to 172 (HR).

Belongs to the HAM1 NTPase family. In terms of assembly, homodimer. The cofactor is Mg(2+). Requires Mn(2+) as cofactor.

It is found in the cytoplasm. It catalyses the reaction ITP + H2O = IMP + diphosphate + H(+). The enzyme catalyses dITP + H2O = dIMP + diphosphate + H(+). The catalysed reaction is XTP + H2O = XMP + diphosphate + H(+). In terms of biological role, pyrophosphatase that hydrolyzes non-canonical purine nucleotides such as inosine triphosphate (ITP), deoxyinosine triphosphate (dITP) or xanthosine 5'-triphosphate (XTP) to their respective monophosphate derivatives. The enzyme does not distinguish between the deoxy- and ribose forms. Probably excludes non-canonical purines from RNA and DNA precursor pools, thus preventing their incorporation into RNA and DNA and avoiding chromosomal lesions. This is Inosine triphosphate pyrophosphatase from Anopheles gambiae (African malaria mosquito).